We begin with the raw amino-acid sequence, 315 residues long: MSFSLKVKNEVCKHVEVNKQEAIAELSAIMKVSGTLLFTNKQFNFKITTENAAIARLVFKILKEHFGIHTEIMIKKNNSLKKNNIYIILISEEEGVKSLLKEVGIIKETINVFSLDYNIPKSIIECDECRRAYIRGAFLGGGSISNPEKTYHLEFVTHNEEYAKDLSNLINSYNLNSKVIKRKNSYIIYLKEGEQIVDLLNIIGAHASLLELENVRIMKEMRNNVNRLVNCETANLSKTVNAAVRQVESIKFIEREIGLGRLPKNLRDVAELRIKYPDESLRELGKMLNPPVGKSGVNHRLRRIEKIADELKQGI.

Positions 280–313 form a DNA-binding region, H-T-H motif; it reads SLRELGKMLNPPVGKSGVNHRLRRIEKIADELKQ.

The protein belongs to the WhiA family.

In terms of biological role, involved in cell division and chromosome segregation. This Clostridium botulinum (strain ATCC 19397 / Type A) protein is Probable cell division protein WhiA.